Consider the following 377-residue polypeptide: Methylthioribose-1-phosphate isomerase (377 aa).

The active-site Proton donor is the Asp254.

It belongs to the eIF-2B alpha/beta/delta subunits family. MtnA subfamily.

The protein resides in the cytoplasm. It is found in the nucleus. The catalysed reaction is 5-(methylsulfanyl)-alpha-D-ribose 1-phosphate = 5-(methylsulfanyl)-D-ribulose 1-phosphate. Its pathway is amino-acid biosynthesis; L-methionine biosynthesis via salvage pathway; L-methionine from S-methyl-5-thio-alpha-D-ribose 1-phosphate: step 1/6. Its function is as follows. Catalyzes the interconversion of methylthioribose-1-phosphate (MTR-1-P) into methylthioribulose-1-phosphate (MTRu-1-P). This Aspergillus terreus (strain NIH 2624 / FGSC A1156) protein is Methylthioribose-1-phosphate isomerase (mri1).